A 269-amino-acid polypeptide reads, in one-letter code: dITP/XTP pyrophosphatase (269 aa).

22-27 contacts substrate; that stretch reads SNNAHK. The Proton acceptor role is filled by aspartate 82. Aspartate 82 contacts Mg(2+). Substrate contacts are provided by residues serine 83, 165 to 168, lysine 188, and 193 to 194; these read FGYD and HR.

Belongs to the HAM1 NTPase family. In terms of assembly, homodimer. Mg(2+) is required as a cofactor.

It carries out the reaction XTP + H2O = XMP + diphosphate + H(+). It catalyses the reaction dITP + H2O = dIMP + diphosphate + H(+). The enzyme catalyses ITP + H2O = IMP + diphosphate + H(+). Functionally, pyrophosphatase that catalyzes the hydrolysis of nucleoside triphosphates to their monophosphate derivatives, with a high preference for the non-canonical purine nucleotides XTP (xanthosine triphosphate), dITP (deoxyinosine triphosphate) and ITP. Seems to function as a house-cleaning enzyme that removes non-canonical purine nucleotides from the nucleotide pool, thus preventing their incorporation into DNA/RNA and avoiding chromosomal lesions. The chain is dITP/XTP pyrophosphatase from Treponema pallidum (strain Nichols).